The primary structure comprises 492 residues: Replication factor C large subunit (492 aa).

Residue 46–53 coordinates ATP; it reads GPPGSGKT. The tract at residues 445–492 is disordered; the sequence is VIPKRPKISDNQISEILTKDNNPKDDVKKASKKPESTSKKQATLDKFF. Positions 461-482 are enriched in basic and acidic residues; the sequence is LTKDNNPKDDVKKASKKPESTS.

This sequence belongs to the activator 1 small subunits family. RfcL subfamily. In terms of assembly, heteromultimer composed of small subunits (RfcS) and large subunits (RfcL).

In terms of biological role, part of the RFC clamp loader complex which loads the PCNA sliding clamp onto DNA. The protein is Replication factor C large subunit of Methanococcus vannielii (strain ATCC 35089 / DSM 1224 / JCM 13029 / OCM 148 / SB).